We begin with the raw amino-acid sequence, 266 residues long: Undecaprenyl-diphosphatase (266 aa).

The next 8 helical transmembrane spans lie at 2-22 (INIL…FLPI), 39-59 (LPII…IIYY), 86-106 (LKLI…GTFI), 112-132 (MFIL…ILML), 145-165 (ILLV…PGIS), 184-204 (AFEI…LFKY), 212-232 (MVLN…VGII), and 246-266 (LYYF…FFRI).

It belongs to the UppP family.

It localises to the cell inner membrane. It carries out the reaction di-trans,octa-cis-undecaprenyl diphosphate + H2O = di-trans,octa-cis-undecaprenyl phosphate + phosphate + H(+). Its function is as follows. Catalyzes the dephosphorylation of undecaprenyl diphosphate (UPP). Confers resistance to bacitracin. This chain is Undecaprenyl-diphosphatase, found in Borrelia garinii subsp. bavariensis (strain ATCC BAA-2496 / DSM 23469 / PBi) (Borreliella bavariensis).